The chain runs to 156 residues: Small ribosomal subunit protein uS7 (156 aa).

Belongs to the universal ribosomal protein uS7 family. In terms of assembly, part of the 30S ribosomal subunit. Contacts proteins S9 and S11.

In terms of biological role, one of the primary rRNA binding proteins, it binds directly to 16S rRNA where it nucleates assembly of the head domain of the 30S subunit. Is located at the subunit interface close to the decoding center, probably blocks exit of the E-site tRNA. This chain is Small ribosomal subunit protein uS7, found in Mannheimia succiniciproducens (strain KCTC 0769BP / MBEL55E).